A 406-amino-acid chain; its full sequence is Phosphorylase b kinase gamma catalytic chain, liver/testis isoform (406 aa).

Residues 24-291 form the Protein kinase domain; it reads YDPKDVIGRG…AEQALQHPFF (268 aa). ATP contacts are provided by residues 30–38 and Lys-53; that span reads IGRGVSSVV. The active-site Proton acceptor is Asp-153. Residues 306–330 form a calmodulin-binding (domain-N) region; the sequence is QRFRVAVWTVLAAGRVALSTHRVRP. Position 345 is a phosphoserine (Ser-345). The segment at 346 to 370 is calmodulin-binding (domain-C); that stretch reads VRHLIDNCAFRLYGHWVKKGEQQNR.

This sequence belongs to the protein kinase superfamily. CAMK Ser/Thr protein kinase family. Hexadecamer of 4 heterotetramers, each composed of alpha, beta, gamma, and delta subunits. Alpha (PHKA1 or PHKA2) and beta (PHKB) are regulatory subunits, gamma (PHKG1 or PHKG2) is the catalytic subunit, and delta is calmodulin.

The enzyme catalyses 2 ATP + phosphorylase b = 2 ADP + phosphorylase a.. Its function is as follows. Catalytic subunit of the phosphorylase b kinase (PHK), which mediates the neural and hormonal regulation of glycogen breakdown (glycogenolysis) by phosphorylating and thereby activating glycogen phosphorylase. May regulate glycogeneolysis in the testis. In vitro, phosphorylates PYGM. This is Phosphorylase b kinase gamma catalytic chain, liver/testis isoform (PHKG2) from Homo sapiens (Human).